Consider the following 196-residue polypeptide: Probable nicotinate-nucleotide adenylyltransferase (196 aa).

The protein belongs to the NadD family.

It carries out the reaction nicotinate beta-D-ribonucleotide + ATP + H(+) = deamido-NAD(+) + diphosphate. The protein operates within cofactor biosynthesis; NAD(+) biosynthesis; deamido-NAD(+) from nicotinate D-ribonucleotide: step 1/1. Functionally, catalyzes the reversible adenylation of nicotinate mononucleotide (NaMN) to nicotinic acid adenine dinucleotide (NaAD). The protein is Probable nicotinate-nucleotide adenylyltransferase of Thermotoga sp. (strain RQ2).